Consider the following 247-residue polypeptide: Fibroblast growth factor 14 (247 aa).

2 disordered regions span residues 1-38 (MAAA…KNRG) and 216-247 (ETVP…CKTT). Positions 15–25 (QAREQHWDRPS) are enriched in basic and acidic residues.

Belongs to the heparin-binding growth factors family. In terms of assembly, interacts with SCN8A.

It localises to the nucleus. Its function is as follows. Probably involved in nervous system development and function. The polypeptide is Fibroblast growth factor 14 (Fgf14) (Rattus norvegicus (Rat)).